The chain runs to 490 residues: Argininosuccinate lyase (490 aa).

It belongs to the lyase 1 family. Argininosuccinate lyase subfamily.

The protein localises to the cytoplasm. The catalysed reaction is 2-(N(omega)-L-arginino)succinate = fumarate + L-arginine. It functions in the pathway amino-acid biosynthesis; L-arginine biosynthesis; L-arginine from L-ornithine and carbamoyl phosphate: step 3/3. This is Argininosuccinate lyase from Bifidobacterium longum subsp. infantis (strain ATCC 15697 / DSM 20088 / JCM 1222 / NCTC 11817 / S12).